The sequence spans 552 residues: Protein FAM234A (552 aa).

The Cytoplasmic portion of the chain corresponds to 1-48 (MTDGKDLEAEIHPLKSENRKVPENAGALAGKEPRGTPAPQTRLSHCRT). The helical; Signal-anchor for type II membrane protein transmembrane segment at 49–69 (AAFFLSLFACLLVVFVVSFII) threads the bilayer. Residues 70-552 (PCPDRPALQG…LSRLRYRSEA (483 aa)) are Extracellular-facing. N-linked (GlcNAc...) asparagine glycans are attached at residues Asn-115, Asn-238, and Asn-473.

Belongs to the FAM234 family.

The protein resides in the membrane. This is Protein FAM234A (FAM234A) from Bos taurus (Bovine).